The primary structure comprises 143 residues: MTATIDRRLSTLNPNAPVFDPVEFREVEDFSPKWWDLVTTSKWFRDFWLSANSENEFLGGDDFSVMEEEFEEMIASSDGGSMADTVTEADVASYLKMLLNIAESTKEKIYRSKVSSCSPKYNQKKYMNPNFNCRRNHHIYQPR.

Positions T11–P21 match the PAM2-like motif.

The chain is Polyadenylate-binding protein-interacting protein 2 (CID2) from Arabidopsis thaliana (Mouse-ear cress).